A 201-amino-acid polypeptide reads, in one-letter code: LexA repressor (201 aa).

A DNA-binding region (H-T-H motif) is located at residues 29–49; the sequence is VREICKAVGLSSTSSVHFHLK. Active-site for autocatalytic cleavage activity residues include serine 125 and lysine 162.

It belongs to the peptidase S24 family. In terms of assembly, homodimer.

It catalyses the reaction Hydrolysis of Ala-|-Gly bond in repressor LexA.. Represses a number of genes involved in the response to DNA damage (SOS response), including recA and lexA. In the presence of single-stranded DNA, RecA interacts with LexA causing an autocatalytic cleavage which disrupts the DNA-binding part of LexA, leading to derepression of the SOS regulon and eventually DNA repair. The chain is LexA repressor from Clostridium botulinum (strain 657 / Type Ba4).